Here is a 2345-residue protein sequence, read N- to C-terminus: Acetyl-CoA carboxylase 1 (2345 aa).

Methionine 1 is subject to N-acetylmethionine. Phosphoserine is present on residues serine 5, serine 23, serine 25, serine 29, serine 34, serine 47, serine 49, and serine 52. Position 57 is a phosphothreonine (threonine 57). Serine 77 is subject to Phosphoserine. Serine 79 bears the Phosphoserine; by AMPK mark. Positions 116–617 (VIEKVLIANN…DTGWLDRLIA (502 aa)) constitute a Biotin carboxylation domain. The 192-residue stretch at 274 to 465 (SKRILNVPQD…LPAAQLQIAM (192 aa)) folds into the ATP-grasp domain. Position 314-319 (314-319 (GGGGKG)) interacts with ATP. Residues glutamate 423, glutamate 436, and asparagine 438 each contribute to the Mg(2+) site. Residues glutamate 423, glutamate 436, and asparagine 438 each contribute to the Mn(2+) site. Arginine 440 is a catalytic residue. Threonine 609 is subject to Phosphothreonine. Residues 744 to 818 (FEKENDPSVM…DPGCVIAKMQ (75 aa)) form the Biotinyl-binding domain. At lysine 785 the chain carries N6-biotinyllysine. Phosphoserine is present on serine 834. Residues serine 1200 and serine 1215 each carry the phosphoserine; by AMPK; in vitro modification. At serine 1217 the chain carries Phosphoserine. A Phosphothreonine modification is found at threonine 1226. A phosphoserine mark is found at serine 1258, serine 1262, and serine 1272. Lysine 1333 is modified (N6-acetyllysine). Residues 1575-1913 (PYVTKDLLQS…NVHSSVPLLN (339 aa)) form the CoA carboxyltransferase N-terminal domain. The interval 1575–2233 (PYVTKDLLQS…EDLVKKKIHS (659 aa)) is carboxyltransferase. CoA-binding residues include arginine 1822, lysine 2126, and arginine 2128. A CoA carboxyltransferase C-terminal domain is found at 1917 to 2233 (PIDRIIEFVP…EDLVKKKIHS (317 aa)). The residue at position 2152 (threonine 2152) is a Phosphothreonine.

As to quaternary structure, monomer, homodimer, and homotetramer. Can form filamentous polymers. Interacts in its inactive phosphorylated form with the BRCT domains of BRCA1 which prevents ACACA dephosphorylation and inhibits lipid synthesis. Interacts with MID1IP1; interaction with MID1IP1 promotes oligomerization and increases its activity. Mg(2+) is required as a cofactor. Requires Mn(2+) as cofactor. It depends on biotin as a cofactor. In terms of processing, the N-terminus is blocked. Post-translationally, phosphorylation on Ser-1262 is required for interaction with BRCA1. Phosphorylation at Ser-79 by AMPK inactivates enzyme activity. Phosphorylated in vitro at Ser-1200 and Ser-1215 by AMPK; the relevance of phosphorylation of these sites in vivo is however unclear. In terms of processing, the biotin cofactor is covalently attached to the central biotinyl-binding domain and is required for the catalytic activity.

The protein localises to the cytoplasm. It localises to the cytosol. The enzyme catalyses hydrogencarbonate + acetyl-CoA + ATP = malonyl-CoA + ADP + phosphate + H(+). It participates in lipid metabolism; malonyl-CoA biosynthesis; malonyl-CoA from acetyl-CoA: step 1/1. Its activity is regulated as follows. Inhibited by phosphorylation. Citrate promotes oligomerization of the protein into filaments that correspond to the most active form of the carboxylase. Its function is as follows. Cytosolic enzyme that catalyzes the carboxylation of acetyl-CoA to malonyl-CoA, the first and rate-limiting step of de novo fatty acid biosynthesis. This is a 2 steps reaction starting with the ATP-dependent carboxylation of the biotin carried by the biotin carboxyl carrier (BCC) domain followed by the transfer of the carboxyl group from carboxylated biotin to acetyl-CoA. The protein is Acetyl-CoA carboxylase 1 of Rattus norvegicus (Rat).